The chain runs to 254 residues: Major prion protein (254 aa).

Positions 1-28 (MANLGYWLLALFVTTCTDVGLCKKRPKP) are cleaved as a signal peptide. Residues 23–38 (KKRPKPGGWNTGGSRY) form an interaction with ADGRG6 region. An interaction with GRB2, ERI3 and SYN1 region spans residues 23–231 (KKRPKPGGWN…SQAYYDGRRS (209 aa)). A disordered region spans residues 24 to 107 (KRPKPGGWNT…QWNKPSKPKT (84 aa)). Tandem repeats lie at residues 51–59 (PQSGGTWGQ), 60–67 (PHGGGWGQ), 68–75 (PHGGGWGQ), 76–83 (PHGGGWGQ), and 84–91 (PHGGGWSQ). The interval 51-91 (PQSGGTWGQPHGGGWGQPHGGGWGQPHGGGWGQPHGGGWSQ) is 5 X 8 AA tandem repeats of P-H-G-G-G-W-G-Q. Over residues 55 to 95 (GTWGQPHGGGWGQPHGGGWGQPHGGGWGQPHGGGWSQGGGT) the composition is skewed to gly residues. Cu(2+) is bound by residues H61, G62, G63, H69, G70, G71, H77, G78, G79, H85, G86, and G87. A disulfide bridge connects residues C179 and C214. N-linked (GlcNAc...) asparagine glycans are attached at residues N181 and N197. S231 carries the GPI-anchor amidated serine lipid modification. The propeptide at 232–254 (SAVLFSSPPVILLISFLIFLIVG) is removed in mature form.

It belongs to the prion family. In terms of assembly, monomer and homodimer. Has a tendency to aggregate into amyloid fibrils containing a cross-beta spine, formed by a steric zipper of superposed beta-strands. Soluble oligomers may represent an intermediate stage on the path to fibril formation. Copper binding may promote oligomerization. Interacts with GRB2, APP, ERI3/PRNPIP and SYN1. Mislocalized cytosolically exposed PrP interacts with MGRN1; this interaction alters MGRN1 subcellular location and causes lysosomal enlargement. Interacts with APP. Interacts with KIAA1191. Interacts with ADGRG6.

Its subcellular location is the cell membrane. It is found in the golgi apparatus. In terms of biological role, its primary physiological function is unclear. May play a role in neuronal development and synaptic plasticity. May be required for neuronal myelin sheath maintenance. May promote myelin homeostasis through acting as an agonist for ADGRG6 receptor. May play a role in iron uptake and iron homeostasis. Soluble oligomers are toxic to cultured neuroblastoma cells and induce apoptosis (in vitro). Association with GPC1 (via its heparan sulfate chains) targets PRNP to lipid rafts. Also provides Cu(2+) or Zn(2+) for the ascorbate-mediated GPC1 deaminase degradation of its heparan sulfate side chains. This chain is Major prion protein (Prnp), found in Rattus norvegicus (Rat).